Consider the following 305-residue polypeptide: tRNA pseudouridine synthase B (305 aa).

D48 acts as the Nucleophile in catalysis.

The protein belongs to the pseudouridine synthase TruB family. Type 1 subfamily.

It catalyses the reaction uridine(55) in tRNA = pseudouridine(55) in tRNA. Its function is as follows. Responsible for synthesis of pseudouridine from uracil-55 in the psi GC loop of transfer RNAs. This is tRNA pseudouridine synthase B from Pseudomonas fluorescens (strain ATCC BAA-477 / NRRL B-23932 / Pf-5).